Reading from the N-terminus, the 319-residue chain is Protease HtpX homolog (319 aa).

2 consecutive transmembrane segments (helical) span residues 6 to 26 (TAMLLAFMTALFMAVGYVIGG) and 28 to 48 (GGMMIALLMAAGMNFFSYWNS). His-130 contributes to the Zn(2+) binding site. Glu-131 is an active-site residue. Residue His-134 participates in Zn(2+) binding. Transmembrane regions (helical) follow at residues 145–165 (LTATLAGAISMLGNFAFFFGG) and 172–192 (PLGFVGVLIAMIVAPFAAMLV). Glu-201 lines the Zn(2+) pocket. The tract at residues 279 to 319 (REMSAGSTAPARPDNAVRRSRSVPKTGWGRGGSEPPKGPWS) is disordered.

The protein belongs to the peptidase M48B family. Zn(2+) is required as a cofactor.

The protein localises to the cell inner membrane. This is Protease HtpX homolog from Sinorhizobium fredii (strain NBRC 101917 / NGR234).